The sequence spans 147 residues: Deoxyuridine 5'-triphosphate nucleotidohydrolase (147 aa).

Residue Arg24 coordinates Mg(2+). DUTP-binding positions include 68 to 70 (PRS), 82 to 85 (GVID), Tyr88, Gly93, Ile95, and Arg111.

It belongs to the dUTPase family. It depends on Mg(2+) as a cofactor.

It catalyses the reaction dUTP + H2O = dUMP + diphosphate + H(+). Functionally, this enzyme is involved in nucleotide metabolism: it produces dUMP, the immediate precursor of thymidine nucleotides and it decreases the intracellular concentration of dUTP so that uracil cannot be incorporated into DNA. This Bos taurus (Bovine) protein is Deoxyuridine 5'-triphosphate nucleotidohydrolase (OPG046).